The chain runs to 480 residues: MAVSSSSFLSTASLTNSKSNISFASSVSPSLRSVVFRSTTPATSHRRSMTVRSKIREIFMPALSSTMTEGKIVSWIKTEGEKLAKGESVVVVESDKADMDVETFYDGYLAAIVVGEGETAPVGAAIGLLAETEAEIEEAKSKAASKSSSSVAEAVVPSPPPVTSSPAPAIAQPAPVTAVSDGPRKTVATPYAKKLAKQHKVDIESVAGTGPFGRITASDVETAAGIAPSKSSIAPPPPPPPPVTAKATTTNLPPLLPDSSIVPFTAMQSAVSKNMIESLSVPTFRVGYPVNTDALDALYEKVKPKGVTMTALLAKAAGMALAQHPVVNASCKDGKSFSYNSSINIAVAVAINGGLITPVLQDADKLDLYLLSQKWKELVGKARSKQLQPHEYNSGTFTLSNLGMFGVDRFDAILPPGQGAIMAVGASKPTVVADKDGFFSVKNTMLVNVTADHRIVYGADLAAFLQTFAKIIENPDSLTL.

The transit peptide at 1–53 (MAVSSSSFLSTASLTNSKSNISFASSVSPSLRSVVFRSTTPATSHRRSMTVRS) directs the protein to the chloroplast. The Lipoyl-binding domain occupies 55-133 (IREIFMPALS…AAIGLLAETE (79 aa)). Lys-96 bears the N6-lipoyllysine mark. Disordered regions lie at residues 140–168 (KSKA…SPAP) and 224–245 (AGIA…PVTA). The span at 142–156 (KAASKSSSSVAEAVV) shows a compositional bias: low complexity. The region spanning 187–224 (VATPYAKKLAKQHKVDIESVAGTGPFGRITASDVETAA) is the Peripheral subunit-binding (PSBD) domain. Over residues 234-243 (APPPPPPPPV) the composition is skewed to pro residues. Residue His-453 is part of the active site.

Belongs to the 2-oxoacid dehydrogenase family. (R)-lipoate is required as a cofactor.

The protein localises to the plastid. The protein resides in the chloroplast stroma. It catalyses the reaction N(6)-[(R)-dihydrolipoyl]-L-lysyl-[protein] + acetyl-CoA = N(6)-[(R)-S(8)-acetyldihydrolipoyl]-L-lysyl-[protein] + CoA. In terms of biological role, the pyruvate dehydrogenase complex catalyzes the overall conversion of pyruvate to acetyl-CoA and CO(2). It contains multiple copies of three enzymatic components: pyruvate dehydrogenase (E1), dihydrolipoamide acetyltransferase (E2) and lipoamide dehydrogenase (E3). The protein is Dihydrolipoyllysine-residue acetyltransferase component 4 of pyruvate dehydrogenase complex, chloroplastic (LTA2) of Arabidopsis thaliana (Mouse-ear cress).